A 375-amino-acid chain; its full sequence is Actin, cytoplasmic (375 aa).

It belongs to the actin family.

It is found in the cytoplasm. The protein resides in the cytoskeleton. The catalysed reaction is ATP + H2O = ADP + phosphate + H(+). Functionally, actins are highly conserved proteins that are involved in various types of cell motility and are ubiquitously expressed in all eukaryotic cells. This chain is Actin, cytoplasmic, found in Sterkiella nova (Ciliate).